The sequence spans 269 residues: Tryptophan synthase alpha chain (269 aa).

Residues E49 and D60 each act as proton acceptor in the active site.

This sequence belongs to the TrpA family. In terms of assembly, tetramer of two alpha and two beta chains.

It catalyses the reaction (1S,2R)-1-C-(indol-3-yl)glycerol 3-phosphate + L-serine = D-glyceraldehyde 3-phosphate + L-tryptophan + H2O. It participates in amino-acid biosynthesis; L-tryptophan biosynthesis; L-tryptophan from chorismate: step 5/5. In terms of biological role, the alpha subunit is responsible for the aldol cleavage of indoleglycerol phosphate to indole and glyceraldehyde 3-phosphate. The protein is Tryptophan synthase alpha chain of Ectopseudomonas mendocina (strain ymp) (Pseudomonas mendocina).